We begin with the raw amino-acid sequence, 104 residues long: Large ribosomal subunit protein uL24 (104 aa).

It belongs to the universal ribosomal protein uL24 family. In terms of assembly, part of the 50S ribosomal subunit.

Its function is as follows. One of two assembly initiator proteins, it binds directly to the 5'-end of the 23S rRNA, where it nucleates assembly of the 50S subunit. One of the proteins that surrounds the polypeptide exit tunnel on the outside of the subunit. In Colwellia psychrerythraea (strain 34H / ATCC BAA-681) (Vibrio psychroerythus), this protein is Large ribosomal subunit protein uL24.